The sequence spans 252 residues: tRNA (guanine-N(1)-)-methyltransferase (252 aa).

Residues G113 and 133-138 (VGDFVL) contribute to the S-adenosyl-L-methionine site.

This sequence belongs to the RNA methyltransferase TrmD family. Homodimer.

Its subcellular location is the cytoplasm. The catalysed reaction is guanosine(37) in tRNA + S-adenosyl-L-methionine = N(1)-methylguanosine(37) in tRNA + S-adenosyl-L-homocysteine + H(+). In terms of biological role, specifically methylates guanosine-37 in various tRNAs. This chain is tRNA (guanine-N(1)-)-methyltransferase, found in Francisella tularensis subsp. holarctica (strain FTNF002-00 / FTA).